A 130-amino-acid polypeptide reads, in one-letter code: Cytochrome b-c1 complex subunit 7 (130 aa).

The protein belongs to the UQCRB/QCR7 family. Component of the ubiquinol-cytochrome c oxidoreductase (cytochrome b-c1 complex, complex III, CIII), a multisubunit enzyme composed of 3 respiratory subunits cytochrome b, cytochrome c1 and Rieske protein, 2 core protein subunits, and additional low-molecular weight protein subunits. The complex exists as an obligatory dimer and forms supercomplexes (SCs) in the inner mitochondrial membrane with cytochrome c oxidase (complex IV, CIV).

It is found in the mitochondrion inner membrane. In terms of biological role, component of the ubiquinol-cytochrome c oxidoreductase, a multisubunit transmembrane complex that is part of the mitochondrial electron transport chain which drives oxidative phosphorylation. The respiratory chain contains 3 multisubunit complexes succinate dehydrogenase (complex II, CII), ubiquinol-cytochrome c oxidoreductase (cytochrome b-c1 complex, complex III, CIII) and cytochrome c oxidase (complex IV, CIV), that cooperate to transfer electrons derived from NADH and succinate to molecular oxygen, creating an electrochemical gradient over the inner membrane that drives transmembrane transport and the ATP synthase. The cytochrome b-c1 complex catalyzes electron transfer from ubiquinol to cytochrome c, linking this redox reaction to translocation of protons across the mitochondrial inner membrane, with protons being carried across the membrane as hydrogens on the quinol. In the process called Q cycle, 2 protons are consumed from the matrix, 4 protons are released into the intermembrane space and 2 electrons are passed to cytochrome c. The polypeptide is Cytochrome b-c1 complex subunit 7 (UBCRBP) (Echinococcus multilocularis (Fox tapeworm)).